The following is a 233-amino-acid chain: MRIEGELVKAKFVKRLNRFVALVEVDGVQEFAHVPNTGRLKELLVDGAAVMVRKYDKTDRKTRFGLILVRKNGIWVSIDSANAPNRIMYEALVQGKFDKFRDYSEIRREVTVLNSRFDFGLFSEGKEYYIEVKGVTLVENRQGFFPDAPTQRGTRHLEELTKIRQNGKEAGVAFIVQREDADVVRPNDRTDKNFANALRIAAEAGVDLMAYVCKVDAEQRRMDIVREIPVIIK.

The protein belongs to the SfsA family.

The polypeptide is Sugar fermentation stimulation protein homolog (Acetivibrio thermocellus (strain ATCC 27405 / DSM 1237 / JCM 9322 / NBRC 103400 / NCIMB 10682 / NRRL B-4536 / VPI 7372) (Clostridium thermocellum)).